We begin with the raw amino-acid sequence, 193 residues long: Biphenyl dioxygenase subunit beta (193 aa).

The protein belongs to the bacterial ring-hydroxylating dioxygenase beta subunit family. As to quaternary structure, heterohexamer consisting of 3 BphA1 subunits and 3 BphA2 subunits. A ferredoxin (BphA3) and a ferredoxin reductase (BphA4) must be present to obtain activity.

It carries out the reaction biphenyl + NADH + O2 + H(+) = (2R,3S)-3-phenylcyclohexa-3,5-diene-1,2-diol + NAD(+). The protein operates within xenobiotic degradation; biphenyl degradation; 2-hydroxy-2,4-pentadienoate and benzoate from biphenyl: step 1/4. In terms of biological role, the beta subunit may be responsible for the substrate specificity of the enzyme. In Pseudomonas sp. (strain KKS102), this protein is Biphenyl dioxygenase subunit beta (bphA2).